We begin with the raw amino-acid sequence, 266 residues long: Type III pantothenate kinase (266 aa).

9–16 serves as a coordination point for ATP; the sequence is DAGNSRIK. Residues Y96 and 103-106 each bind substrate; that span reads GSDR. D105 functions as the Proton acceptor in the catalytic mechanism. Position 129 (T129) interacts with ATP. T189 contributes to the substrate binding site.

This sequence belongs to the type III pantothenate kinase family. In terms of assembly, homodimer. The cofactor is NH4(+). K(+) serves as cofactor.

It is found in the cytoplasm. The enzyme catalyses (R)-pantothenate + ATP = (R)-4'-phosphopantothenate + ADP + H(+). Its pathway is cofactor biosynthesis; coenzyme A biosynthesis; CoA from (R)-pantothenate: step 1/5. In terms of biological role, catalyzes the phosphorylation of pantothenate (Pan), the first step in CoA biosynthesis. In Burkholderia cenocepacia (strain ATCC BAA-245 / DSM 16553 / LMG 16656 / NCTC 13227 / J2315 / CF5610) (Burkholderia cepacia (strain J2315)), this protein is Type III pantothenate kinase.